Consider the following 628-residue polypeptide: MTWSQDLAHKTYSIRHWADGYFEVNDAGHMVVMPLGGDGVRISLPEVVDAARAAGAKLPLLLRFPDILRHRLGKLQAAFVQAQSEWEYAGGYTAVYPIKVNQHRGVAGVLASHQGDGFGLEAGSKPELMAVLALSRQGGLIVCNGYKDREYIRLALIGRKLGLKTFIVIEKPSELRMVLEEAKTLGVLPGLGVRVRLASLGAGKWQNSGGDKAKFGLSPRQVLDVWKVLRGTEYADCLNVMHFHMGSQISNVRDIAKGMREATRYFVELSRLGAKITHVDVGGGLGIDYEGTRSRSDCSINYGLQAYASHIVQPLASACEDYDLVPPRIVTECGRAMTAHHAVLIANVTEVEAVPEGRVPGLCDDEPAVVRHMREIYGELDARPAIELFYEAQHFHAEGLAAYTLGQIDLVHRARIDDLFYAISHGVRERLSHEEKSHRPVLDELNERLVDKYFVNFSVFESIPDVWAINQIFPIVPIERLNEAPTRRGVVCDLTCDSDGTVKQYVENESLDSALPLHVLRHGEAYRIGFFLVGAYQEILGDIHNLFGDTDAVEVAVDGRGYRIAQQRCGDTTDVMLDYVGYALDEVRRVYAQRITAAGMSAAESKALSDMLEAGLTGYPYLSDVPLE.

Lys99 bears the N6-(pyridoxal phosphate)lysine mark. Position 279-289 (279-289) interacts with substrate; that stretch reads VDVGGGLGIDY.

The protein belongs to the Orn/Lys/Arg decarboxylase class-II family. SpeA subfamily. Mg(2+) serves as cofactor. Pyridoxal 5'-phosphate is required as a cofactor.

The catalysed reaction is L-arginine + H(+) = agmatine + CO2. Its pathway is amine and polyamine biosynthesis; agmatine biosynthesis; agmatine from L-arginine: step 1/1. In terms of biological role, catalyzes the biosynthesis of agmatine from arginine. This is Biosynthetic arginine decarboxylase from Xylella fastidiosa (strain M12).